Here is a 175-residue protein sequence, read N- to C-terminus: ATP-dependent protease subunit HslV (175 aa).

Residue Thr2 is part of the active site. Ala156, Cys159, and Thr162 together coordinate Na(+).

The protein belongs to the peptidase T1B family. HslV subfamily. In terms of assembly, a double ring-shaped homohexamer of HslV is capped on each side by a ring-shaped HslU homohexamer. The assembly of the HslU/HslV complex is dependent on binding of ATP.

Its subcellular location is the cytoplasm. The catalysed reaction is ATP-dependent cleavage of peptide bonds with broad specificity.. Allosterically activated by HslU binding. Its function is as follows. Protease subunit of a proteasome-like degradation complex believed to be a general protein degrading machinery. The chain is ATP-dependent protease subunit HslV from Rhizobium etli (strain ATCC 51251 / DSM 11541 / JCM 21823 / NBRC 15573 / CFN 42).